We begin with the raw amino-acid sequence, 763 residues long: Ethylene receptor 2 (763 aa).

3 helical membrane passes run 58–78 (FLIA…ATCS), 86–106 (IVLQ…ITMF), and 115–135 (VVLA…ATAI). 2 residues coordinate Cu cation: Cys-97 and His-101. The GAF domain maps to 190-339 (DRHTILYTTM…VVADQVAVAL (150 aa)). A Histidine kinase domain is found at 382 to 615 (AMYDGMRRPM…TIMLALQFQL (234 aa)). A Response regulatory domain is found at 641–760 (QVILVDSDDT…ALGDELYRVL (120 aa)). Position 692 is a 4-aspartylphosphate (Asp-692).

Belongs to the ethylene receptor family. Cu cation serves as cofactor. Expressed in anthers and hulls.

Its subcellular location is the endoplasmic reticulum membrane. The catalysed reaction is ATP + protein L-histidine = ADP + protein N-phospho-L-histidine.. Ethylene receptor related to bacterial two-component regulators. Acts as a negative regulator of ethylene signaling. May delay the transition from the vegetative stage to the floral stage by up-regulating GI (GIGANTEA) and RCN1 and cause starch accumulation in stems by down-regulating the alpha-amylase AMY3D. The polypeptide is Ethylene receptor 2 (Oryza sativa subsp. indica (Rice)).